The sequence spans 224 residues: E3 ubiquitin-protein ligase TRIM48 (224 aa).

Residues C31–I72 form an RING-type zinc finger. The B box-type zinc finger occupies S104–A145. 4 residues coordinate Zn(2+): C109, H112, C131, and H137.

This sequence belongs to the TRIM/RBCC family. As to quaternary structure, interacts with PRMT1; the interaction leads to ubiquitination of PRMT1 by TRIM48. Interacts with MAP3K5. Interacts with STRAP.

Its subcellular location is the cytoplasm. It localises to the cytosol. The enzyme catalyses S-ubiquitinyl-[E2 ubiquitin-conjugating enzyme]-L-cysteine + [acceptor protein]-L-lysine = [E2 ubiquitin-conjugating enzyme]-L-cysteine + N(6)-ubiquitinyl-[acceptor protein]-L-lysine.. E3 ubiquitin-protein ligase which promotes K48-linked polyubiquitination of protein methyltransferase PRMT1, leading to PRMT1 degradation. This suppresses methylation of the PRMT1 substrate MAP3K5/ASK1, promoting its activation and increasing MAP3K5-dependent cell death induced by oxidative stress. TRIM48-mediated ubiquitination of PRMT1 also suppresses methylation of FOXO1 by PRMT1, leading to inhibition of FOXO1 transcriptional activity. The polypeptide is E3 ubiquitin-protein ligase TRIM48 (Homo sapiens (Human)).